Here is a 161-residue protein sequence, read N- to C-terminus: Putative pre-16S rRNA nuclease (161 aa).

The protein belongs to the YqgF nuclease family.

Its subcellular location is the cytoplasm. Could be a nuclease involved in processing of the 5'-end of pre-16S rRNA. In Bradyrhizobium sp. (strain BTAi1 / ATCC BAA-1182), this protein is Putative pre-16S rRNA nuclease.